Here is a 244-residue protein sequence, read N- to C-terminus: Type I iodothyronine deiodinase (244 aa).

Residues 1–12 lie on the Extracellular side of the membrane; that stretch reads MGLSQLGLWLRR. Residues 13–33 traverse the membrane as a helical; Signal-anchor for type III membrane protein segment; it reads LWVLFQVALQVAVGKVFLILF. Topologically, residues 34–244 are cytoplasmic; sequence PSRVKQHIVA…VRAVLEKLHS (211 aa). The active site involves U121. Residue U121 is a non-standard amino acid, selenocysteine.

This sequence belongs to the iodothyronine deiodinase family. As to quaternary structure, predominantly monomer. Can form homodimers but homodimerization is not essential for enzyme activity.

It localises to the cell membrane. Its subcellular location is the endoplasmic reticulum membrane. The protein localises to the basolateral cell membrane. The catalysed reaction is 3,3',5-triiodo-L-thyronine + iodide + A + H(+) = L-thyroxine + AH2. The enzyme catalyses 3,3',5'-triiodo-L-thyronine + iodide + A + H(+) = L-thyroxine + AH2. It catalyses the reaction 3,3'-diiodo-L-thyronine + iodide + A + H(+) = 3,3',5'-triiodo-L-thyronine + AH2. It carries out the reaction 3,3'-diiodo-L-thyronine + iodide + A + H(+) = 3,3',5-triiodo-L-thyronine + AH2. The catalysed reaction is 3'-iodo-L-thyronine + iodide + A + H(+) = 3',5'-diiodo-L-thyronine + AH2. The enzyme catalyses 3-iodo-L-thyronine + iodide + A + H(+) = 3,5-diiodo-L-thyronine + AH2. It catalyses the reaction 3-iodo-L-thyronine + iodide + A + H(+) = 3,3'-diiodo-L-thyronine + AH2. It carries out the reaction 3,3'-diiodothyronamine + iodide + A + H(+) = 3,3',5'-triiodothyronamine + AH2. The catalysed reaction is 3'-iodothyronamine + iodide + A + H(+) = 3',5'-diiodothyronamine + AH2. The enzyme catalyses 3-iodothyronamine + iodide + A + H(+) = 3,3'-diiodothyronamine + AH2. It catalyses the reaction 3,3'-diiodothyronamine + iodide + A + H(+) = 3,3',5-triiodothyronamine + AH2. It carries out the reaction 3-iodothyronamine + iodide + A + H(+) = 3,5-diiodothyronamine + AH2. The catalysed reaction is 3,3'-diiodo-L-thyronine sulfate + iodide + A + H(+) = 3,3',5'-triiodo-L-thyronine sulfate + AH2. The enzyme catalyses 3,3',5'-triiodo-L-thyronine sulfate + iodide + A + H(+) = L-thyroxine sulfate + AH2. It catalyses the reaction 3,3'-diiodo-L-thyronine sulfate + iodide + A + H(+) = 3,3',5-triiodo-L-thyronine sulfate + AH2. Functionally, plays a crucial role in the metabolism of thyroid hormones (TH) and has specific roles in TH activation and inactivation by deiodination. Catalyzes the deiodination of L-thyroxine (T4) to 3,5,3'-triiodothyronine (T3) and 3',5'-diiodothyronine (3',5'-T2) to 3'-monoiodothyronine (3'-T1) via outer-ring deiodination (ORD). Catalyzes the deiodination of T4 to 3,3',5'-triiodothyronine (rT3), T3 to 3,3'-diiodothyronine (3,3'-T2), 3,5-diiodothyronine (3,5-T2) to 3-monoiodothyronine (3-T1) and 3,3'-T2 to 3-T1 via inner-ring deiodination (IRD). Catalyzes the deiodination of rT3 to 3,3'-T2 via ORD. Catalyzes the phenolic ring deiodinations of 3,3',5'-triiodothyronamine, 3',5'-diiodothyronamine and 3,3'-diiodothyronamine as well as tyrosyl ring deiodinations of 3,5,3'-triiodothyronamine and 3,5-diiodothyronamine. Catalyzes the deiodination of L-thyroxine sulfate and 3,3',5-triiodo-L-thyronine sulfate via IRD and of 3,3',5'-triiodo-L-thyronine sulfate via ORD. This is Type I iodothyronine deiodinase (DIO1) from Felis catus (Cat).